A 180-amino-acid polypeptide reads, in one-letter code: Large ribosomal subunit protein uL5 (180 aa).

Belongs to the universal ribosomal protein uL5 family. In terms of assembly, part of the 50S ribosomal subunit; part of the 5S rRNA/L5/L18/L25 subcomplex. Contacts the 5S rRNA and the P site tRNA. Forms a bridge to the 30S subunit in the 70S ribosome.

In terms of biological role, this is one of the proteins that bind and probably mediate the attachment of the 5S RNA into the large ribosomal subunit, where it forms part of the central protuberance. In the 70S ribosome it contacts protein S13 of the 30S subunit (bridge B1b), connecting the 2 subunits; this bridge is implicated in subunit movement. Contacts the P site tRNA; the 5S rRNA and some of its associated proteins might help stabilize positioning of ribosome-bound tRNAs. The chain is Large ribosomal subunit protein uL5 from Chloroflexus aurantiacus (strain ATCC 29364 / DSM 637 / Y-400-fl).